Reading from the N-terminus, the 273-residue chain is HMP-PP phosphatase (273 aa).

The active-site Nucleophile is D8. Mg(2+)-binding residues include D8, D10, and D212.

This sequence belongs to the HAD-like hydrolase superfamily. Cof family. The cofactor is Mg(2+).

It carries out the reaction 4-amino-2-methyl-5-(diphosphooxymethyl)pyrimidine + H2O = 4-amino-2-methyl-5-(phosphooxymethyl)pyrimidine + phosphate + H(+). Functionally, catalyzes the hydrolysis of 4-amino-2-methyl-5-hydroxymethylpyrimidine pyrophosphate (HMP-PP) to 4-amino-2-methyl-5-hydroxymethylpyrimidine phosphate (HMP-P). This is HMP-PP phosphatase from Yersinia pseudotuberculosis serotype IB (strain PB1/+).